The primary structure comprises 516 residues: MLMPHSAALNAARRSADLTALADGGALDVIVIGGGITGVGIALDAATRGLTVALVEKHDLAFGTSRWSSKLVHGGLRYLASGNVGIARRSAVERGILMTRNAPHLVHAMPQLVPLLPSMGHTKRALVRAGFLAGDALRVLAGTPAATLPRSRRIPASRVVEIAPTVRRDGLDGGLLAYDGQLIDDARLVMAVARTAAQHGARILTYVGASNVTGTSVELTDRRTRQSFALSARAVINAAGVWAGEIDPSLRLRPSRGTHLVFDAKSFANPTAALTIPIPGELNRFVFAMPEQLGRIYLGLTDEDAPGPIPDVPQPSSEEITFLLDTVNTALGTAVGTKDVIGAYAGLRPLIDTGGAGVQGRTADVSRDHAVFESPSGVISVVGGKLTEYRYMAEDVLNRAITLRHLRAAKCRTRNLPLIGAPANPGPAPGSGAGLPESLVARYGAEAANVAAAATCERPTEPVADGIDVTRAEFEYAVTHEGALDVDDILDRRTRIGLVPRDRERVVAVAKEFLSR.

28–56 (DVIVIGGGITGVGIALDAATRGLTVALVE) lines the FAD pocket.

It belongs to the FAD-dependent glycerol-3-phosphate dehydrogenase family. Requires FAD as cofactor.

It localises to the cytoplasm. The catalysed reaction is a quinone + sn-glycerol 3-phosphate = dihydroxyacetone phosphate + a quinol. This chain is Glycerol-3-phosphate dehydrogenase 1 (glpD1), found in Mycobacterium bovis (strain ATCC BAA-935 / AF2122/97).